The chain runs to 1788 residues: U3 small nucleolar RNA-associated protein 10 (1788 aa).

The HEAT 1 repeat unit spans residues 585–622; the sequence is LDFQAVVPYAIVALSDPAKKVRRAAAELVTVLGSFYET. Residues 884–905 are disordered; it reads PATKRRRVGSSEKSVDSQSPAD. HEAT repeat units follow at residues 926-962, 1049-1086, 1257-1294, 1301-1339, 1703-1740, and 1744-1781; these read AKHP…LVLS, QTVK…AYEH, LSIA…SESI, EALL…KYGK, EHHK…RLGE, and QSLP…TLGE.

Belongs to the HEATR1/UTP10 family. Component of the ribosomal small subunit (SSU) processome.

The protein resides in the nucleus. Its subcellular location is the nucleolus. Involved in nucleolar processing of pre-18S ribosomal RNA. Involved in ribosome biosynthesis. The chain is U3 small nucleolar RNA-associated protein 10 (rbg-5) from Neurospora crassa (strain ATCC 24698 / 74-OR23-1A / CBS 708.71 / DSM 1257 / FGSC 987).